The sequence spans 57 residues: MATPKRRMSRANTRSRRSQWKATKAELVGVTVGGQKHKVPRRLLKAARLGLIDLDRR.

Residues 1-19 (MATPKRRMSRANTRSRRSQ) show a composition bias toward basic residues. Residues 1–21 (MATPKRRMSRANTRSRRSQWK) are disordered.

This sequence belongs to the bacterial ribosomal protein bL32 family.

This is Large ribosomal subunit protein bL32 from Mycobacterium ulcerans (strain Agy99).